The following is a 478-amino-acid chain: CDK5 and ABL1 enzyme substrate 2 (478 aa).

A disordered region spans residues methionine 1 to arginine 121. A compositionally biased stretch (pro residues) spans glycine 11–alanine 24. Low complexity predominate over residues proline 25 to alanine 35. Basic residues predominate over residues leucine 36 to glutamine 46. Positions glutamate 69–glycine 92 are enriched in pro residues. Residues serine 130 and serine 208 each carry the phosphoserine modification. Positions serine 257–aspartate 296 are disordered.

This sequence belongs to the cyclin family. As to quaternary structure, binds to CDK3, CDK5 and ABL1. The C-terminal cyclin-box-like region binds to CDK5.

Functionally, unknown. Probably involved in G1-S cell cycle transition. The protein is CDK5 and ABL1 enzyme substrate 2 (CABLES2) of Homo sapiens (Human).